Here is a 511-residue protein sequence, read N- to C-terminus: Putative polyol transporter 1 (511 aa).

Helical transmembrane passes span 27-47 (FACA…IGVM), 63-83 (VQLE…SGAA), 94-114 (YTIV…GFAT), 124-144 (FVAG…TAEV), 151-171 (GFLT…GYVS), 186-206 (FMLG…LAMP), 284-304 (ILIA…DAVV), 324-344 (LATV…TCVV), 351-371 (ALLL…GTSL), 384-404 (WAIG…SIGA), 424-444 (GASL…MTFL), and 454-474 (GAFL…FTFL).

It belongs to the major facilitator superfamily. Sugar transporter (TC 2.A.1.1) family.

It is found in the membrane. In terms of biological role, plasma membrane sugar-proton symporter. In Arabidopsis thaliana (Mouse-ear cress), this protein is Putative polyol transporter 1 (PLT1).